We begin with the raw amino-acid sequence, 365 residues long: tRNA-specific 2-thiouridylase MnmA (365 aa).

ATP is bound by residues 14–21 and leucine 40; that span reads AMSGGVDS. The active-site Nucleophile is cysteine 108. A disulfide bridge connects residues cysteine 108 and cysteine 204. Glycine 132 is a binding site for ATP. Residues 154-156 form an interaction with tRNA region; the sequence is KDQ. Catalysis depends on cysteine 204, which acts as the Cysteine persulfide intermediate.

Belongs to the MnmA/TRMU family.

It is found in the cytoplasm. It carries out the reaction S-sulfanyl-L-cysteinyl-[protein] + uridine(34) in tRNA + AH2 + ATP = 2-thiouridine(34) in tRNA + L-cysteinyl-[protein] + A + AMP + diphosphate + H(+). Catalyzes the 2-thiolation of uridine at the wobble position (U34) of tRNA, leading to the formation of s(2)U34. The sequence is that of tRNA-specific 2-thiouridylase MnmA from Rickettsia felis (strain ATCC VR-1525 / URRWXCal2) (Rickettsia azadi).